Reading from the N-terminus, the 350-residue chain is UDP-N-acetylenolpyruvoylglucosamine reductase (350 aa).

One can recognise an FAD-binding PCMH-type domain in the interval 24 to 195 (HVEATARWLL…VAVEFNLPLL (172 aa)). Arg-172 is a catalytic residue. Ser-245 (proton donor) is an active-site residue. The active site involves Glu-342.

The protein belongs to the MurB family. FAD is required as a cofactor.

The protein localises to the cytoplasm. It catalyses the reaction UDP-N-acetyl-alpha-D-muramate + NADP(+) = UDP-N-acetyl-3-O-(1-carboxyvinyl)-alpha-D-glucosamine + NADPH + H(+). Its pathway is cell wall biogenesis; peptidoglycan biosynthesis. Functionally, cell wall formation. This Xanthomonas axonopodis pv. citri (strain 306) protein is UDP-N-acetylenolpyruvoylglucosamine reductase.